The sequence spans 301 residues: GTPase Era (301 aa).

The Era-type G domain occupies Tyr7–Glu175. The segment at Gly15 to Ser22 is G1. Residue Gly15–Ser22 coordinates GTP. Residues Gln41 to His45 form a G2 region. The segment at Asp62–Gly65 is G3. Residues Asp62–Leu66 and Asn124–Asp127 contribute to the GTP site. Residues Asn124–Asp127 are G4. A G5 region spans residues Ile154–Ala156. The 78-residue stretch at Leu206–Ser283 folds into the KH type-2 domain.

This sequence belongs to the TRAFAC class TrmE-Era-EngA-EngB-Septin-like GTPase superfamily. Era GTPase family. In terms of assembly, monomer.

The protein resides in the cytoplasm. It localises to the cell inner membrane. In terms of biological role, an essential GTPase that binds both GDP and GTP, with rapid nucleotide exchange. Plays a role in 16S rRNA processing and 30S ribosomal subunit biogenesis and possibly also in cell cycle regulation and energy metabolism. This chain is GTPase Era, found in Klebsiella pneumoniae subsp. pneumoniae (strain ATCC 700721 / MGH 78578).